A 283-amino-acid polypeptide reads, in one-letter code: Elongation factor Ts (283 aa).

The interval 84-87 is involved in Mg(2+) ion dislocation from EF-Tu; the sequence is TDFV.

The protein belongs to the EF-Ts family.

The protein localises to the cytoplasm. Associates with the EF-Tu.GDP complex and induces the exchange of GDP to GTP. It remains bound to the aminoacyl-tRNA.EF-Tu.GTP complex up to the GTP hydrolysis stage on the ribosome. The sequence is that of Elongation factor Ts from Bifidobacterium longum (strain DJO10A).